We begin with the raw amino-acid sequence, 200 residues long: Imidazoleglycerol-phosphate dehydratase (200 aa).

It belongs to the imidazoleglycerol-phosphate dehydratase family.

Its subcellular location is the cytoplasm. The enzyme catalyses D-erythro-1-(imidazol-4-yl)glycerol 3-phosphate = 3-(imidazol-4-yl)-2-oxopropyl phosphate + H2O. It participates in amino-acid biosynthesis; L-histidine biosynthesis; L-histidine from 5-phospho-alpha-D-ribose 1-diphosphate: step 6/9. This Chlorobium phaeobacteroides (strain BS1) protein is Imidazoleglycerol-phosphate dehydratase.